The primary structure comprises 403 residues: D-galactonate dehydratase family member Mmwyl1_0037 (403 aa).

Substrate contacts are provided by N37 and H122. Residue Y159 is the Proton donor/acceptor of the active site. D211 is a binding site for Mg(2+). H213 functions as the Proton donor/acceptor in the catalytic mechanism. E237 and E263 together coordinate Mg(2+). The substrate site is built by E263, R284, H313, D317, and E340.

The protein belongs to the mandelate racemase/muconate lactonizing enzyme family. GalD subfamily. Requires Mg(2+) as cofactor.

It catalyses the reaction D-mannonate = 2-dehydro-3-deoxy-D-gluconate + H2O. Functionally, has low D-mannonate dehydratase activity (in vitro), suggesting that this is not a physiological substrate and that it has no significant role in D-mannonate degradation in vivo. Has no detectable activity with a panel of 70 other acid sugars (in vitro). This chain is D-galactonate dehydratase family member Mmwyl1_0037, found in Marinomonas sp. (strain MWYL1).